Consider the following 439-residue polypeptide: DNA damage-inducible protein 1 (439 aa).

The Ubiquitin-like domain maps to 1–82; sequence MQITIAIQDT…LALHVRETQR (82 aa). Residues 82 to 101 are disordered; that stretch reads RATAVPESQQGRPAAPPQQD. Asp220 is an active-site residue. The segment at 333–398 is disordered; sequence QDEPTIEGPG…PAPRAPQARS (66 aa). 2 stretches are compositionally biased toward low complexity: residues 364–375 and 383–398; these read GQAGPSTAAQPG and PASA…QARS. The UBA domain occupies 398 to 438; it reads SFPREHIEQLVALGADEQKAIRALEATDGNVEYAASLIFEG.

Belongs to the DDI1 family. As to quaternary structure, binds ubiquitin and polyubiquitinated proteins.

The protein localises to the cytoplasm. Functionally, probable aspartic protease. May be involved in the regulation of exocytosis. Acts as a linker between the 19S proteasome and polyubiquitinated proteins via UBA domain interactions with ubiquitin for their subsequent degradation. Required for S-phase checkpoint control. The sequence is that of DNA damage-inducible protein 1 (ddi-1) from Neurospora crassa (strain ATCC 24698 / 74-OR23-1A / CBS 708.71 / DSM 1257 / FGSC 987).